The sequence spans 333 residues: Probable tRNA pseudouridine synthase B (333 aa).

D66 (nucleophile) is an active-site residue. The region spanning 233-308 (LKKIIVKDSA…EVVEITRVIM (76 aa)) is the PUA domain.

Belongs to the pseudouridine synthase TruB family. Type 2 subfamily.

It catalyses the reaction uridine(55) in tRNA = pseudouridine(55) in tRNA. Its function is as follows. Could be responsible for synthesis of pseudouridine from uracil-55 in the psi GC loop of transfer RNAs. This Methanococcus maripaludis (strain C7 / ATCC BAA-1331) protein is Probable tRNA pseudouridine synthase B.